The primary structure comprises 655 residues: p-hydroxybenzoic acid efflux pump subunit AaeB (655 aa).

Over 1-12 (MGIFSIANQHIR) the chain is Periplasmic. Residues 13–33 (FAVKLATAIVLALFVGFHFQL) form a helical membrane-spanning segment. Over 34–37 (ETPR) the chain is Cytoplasmic. The helical transmembrane segment at 38–58 (WAVLTAAIVAAGPAFAAGGEP) threads the bilayer. Topologically, residues 59-68 (YSGAIRYRGF) are periplasmic. The chain crosses the membrane as a helical span at residues 69–89 (LRIIGTFIGCIAGLVIIIAMI). The Cytoplasmic portion of the chain corresponds to 90–92 (RAP). The chain crosses the membrane as a helical span at residues 93 to 113 (LLMILVCCIWAGFCTWISSLV). At 114-120 (RIENSYA) the chain is on the periplasmic side. The chain crosses the membrane as a helical span at residues 121–141 (WGLAGYTALIIVITIQPEPLL). The Cytoplasmic portion of the chain corresponds to 142-151 (TPQFAVERCS). The chain crosses the membrane as a helical span at residues 152-172 (EIVIGIVCAIMADLLFSPRSI). The Periplasmic portion of the chain corresponds to 173-369 (KQEVDRELES…RTTLSCILGT (197 aa)). The helical transmembrane segment at 370 to 390 (LFWLWTGWTSGSGAMVMIAVV) threads the bilayer. Residues 391 to 406 (TSLAMRLPNPRMVAID) lie on the Cytoplasmic side of the membrane. The helical transmembrane segment at 407 to 427 (FIYGTLAALPLGLLYFLVIIP) threads the bilayer. The Periplasmic portion of the chain corresponds to 428–430 (NTQ). Residues 431-451 (QSMLLLCISLAVLGFFLGIEV) form a helical membrane-spanning segment. Over 452-458 (QKRRLGS) the chain is Cytoplasmic. A helical transmembrane segment spans residues 459–479 (MGALASTINIIVLDNPMTFHF). Residues 480 to 481 (SQ) lie on the Periplasmic side of the membrane. Residues 482-502 (FLDSALGQIVGCVLAFTVILL) form a helical membrane-spanning segment. Residues 503-655 (VRDKSRDRTG…HKYQHALTDS (153 aa)) lie on the Cytoplasmic side of the membrane.

This sequence belongs to the aromatic acid exporter ArAE (TC 2.A.85) family.

Its subcellular location is the cell inner membrane. In terms of biological role, forms an efflux pump with AaeA. Could function as a metabolic relief valve, allowing to eliminate certain compounds when they accumulate to high levels in the cell. In Escherichia coli O6:H1 (strain CFT073 / ATCC 700928 / UPEC), this protein is p-hydroxybenzoic acid efflux pump subunit AaeB.